Consider the following 56-residue polypeptide: MSRKKKKVLVKLVSSAGTGVFWVKQRNPKTQTEKLSFRKYDPKVRKHVQFTEAKIK.

It belongs to the bacterial ribosomal protein bL33 family.

In Orientia tsutsugamushi (strain Ikeda) (Rickettsia tsutsugamushi), this protein is Large ribosomal subunit protein bL33.